Here is a 180-residue protein sequence, read N- to C-terminus: Acireductone dioxygenase (180 aa).

Fe(2+) is bound by residues His96, His98, Glu102, and His140. Ni(2+)-binding residues include His96, His98, Glu102, and His140.

This sequence belongs to the acireductone dioxygenase (ARD) family. Monomer. Requires Fe(2+) as cofactor. Ni(2+) is required as a cofactor.

It carries out the reaction 1,2-dihydroxy-5-(methylsulfanyl)pent-1-en-3-one + O2 = 3-(methylsulfanyl)propanoate + CO + formate + 2 H(+). It catalyses the reaction 1,2-dihydroxy-5-(methylsulfanyl)pent-1-en-3-one + O2 = 4-methylsulfanyl-2-oxobutanoate + formate + 2 H(+). It participates in amino-acid biosynthesis; L-methionine biosynthesis via salvage pathway; L-methionine from S-methyl-5-thio-alpha-D-ribose 1-phosphate: step 5/6. In terms of biological role, catalyzes 2 different reactions between oxygen and the acireductone 1,2-dihydroxy-3-keto-5-methylthiopentene (DHK-MTPene) depending upon the metal bound in the active site. Fe-containing acireductone dioxygenase (Fe-ARD) produces formate and 2-keto-4-methylthiobutyrate (KMTB), the alpha-ketoacid precursor of methionine in the methionine recycle pathway. Ni-containing acireductone dioxygenase (Ni-ARD) produces methylthiopropionate, carbon monoxide and formate, and does not lie on the methionine recycle pathway. This is Acireductone dioxygenase from Synechococcus sp. (strain WH7803).